The chain runs to 487 residues: Variant surface glycoprotein WRATAT B (487 aa).

The first 19 residues, 1–19 (MWIILALLTLAGSRVAHGA), serve as a signal peptide directing secretion. Residues N71, N84, N418, and N465 are each glycosylated (N-linked (GlcNAc...) asparagine). A disordered region spans residues 443–468 (KPKAGTEAATTGPGERDAGATANTTG). The GPI-anchor amidated serine moiety is linked to residue S470. A propeptide spans 471–487 (NSFVIKTSPLLFAFLLF) (removed in mature form).

It localises to the cell membrane. Its function is as follows. VSG forms a coat on the surface of the parasite. The trypanosome evades the immune response of the host by expressing a series of antigenically distinct VSGs from an estimated 1000 VSG genes. The polypeptide is Variant surface glycoprotein WRATAT B (Trypanosoma brucei rhodesiense).